The chain runs to 188 residues: NANOG neighbor homeobox (188 aa).

The tract at residues 28-106 is disordered; the sequence is ETILANKKQS…NEKQKQYPEK (79 aa). Basic and acidic residues predominate over residues 57–106; sequence QNGKQKWREEGEAGRKREREKEEKNEKELQDEQENKRKRENEKQKQYPEK. Positions 102–161 form a DNA-binding region, homeobox; that stretch reads QYPEKRLVSKSLMHTLWAKFKLNRCPTIQESLSLSFEFDMTHKQISQWFCKTRKKYNKEM.

It is found in the nucleus. The sequence is that of NANOG neighbor homeobox (NANOGNB) from Homo sapiens (Human).